Reading from the N-terminus, the 443-residue chain is Phosphoglucosamine mutase (443 aa).

S102 (phosphoserine intermediate) is an active-site residue. Residues S102, D241, D243, and D245 each contribute to the Mg(2+) site. At S102 the chain carries Phosphoserine.

The protein belongs to the phosphohexose mutase family. Mg(2+) is required as a cofactor. Activated by phosphorylation.

The catalysed reaction is alpha-D-glucosamine 1-phosphate = D-glucosamine 6-phosphate. Functionally, catalyzes the conversion of glucosamine-6-phosphate to glucosamine-1-phosphate. This chain is Phosphoglucosamine mutase, found in Polaromonas sp. (strain JS666 / ATCC BAA-500).